Reading from the N-terminus, the 351-residue chain is Prohormone-2 (351 aa).

Residues 1-21 (MMCDWVWLLLTLCSLLMIVQS) form the signal peptide. Propeptides lie at residues 22 to 177 (LPTN…QTQV) and 192 to 319 (ELDI…MISR). The segment covering 51–69 (GNQQNHQPENNPSSSYSST) has biased composition (polar residues). 2 disordered regions span residues 51 to 71 (GNQQNHQPENNPSSSYSSTAE) and 136 to 176 (NEDR…VQTQ). Basic and acidic residues predominate over residues 136-145 (NEDRRKRSEK). A compositionally biased stretch (low complexity) spans 158-176 (PSTTSFQSPTSTQQSVQTQ).

It is found in the secreted. The chain is Prohormone-2 from Apis mellifera (Honeybee).